Consider the following 3019-residue polypeptide: Genome polyprotein (3019 aa).

Serine 2 is subject to N-acetylserine; by host. Residues 2-23 (STLPKPQRKTKRNTNRRPMDVK) are interaction with STAT1. The segment at 2–58 (STLPKPQRKTKRNTNRRPMDVKFPGGGQIVGGVYLLPRRGPRLGVRATRKTSERSQP) is interaction with EIF2AK2/PKR. The interaction with DDX3X stretch occupies residues 2 to 59 (STLPKPQRKTKRNTNRRPMDVKFPGGGQIVGGVYLLPRRGPRLGVRATRKTSERSQPR). Residues 2–75 (STLPKPQRKT…PKARQPQGRH (74 aa)) are disordered. At 2–168 (STLPKPQRKT…EDGINYATGN (167 aa)) the chain is on the cytoplasmic side. 2 consecutive short sequence motifs (nuclear localization signal) follow at residues 5–13 (PKPQRKTKR) and 38–43 (PRRGPR). Residues 7-16 (PQRKTKRNTN) are compositionally biased toward basic residues. The span at 32-47 (GGVYLLPRRGPRLGVR) shows a compositional bias: low complexity. A Phosphoserine; by host modification is found at serine 53. Short sequence motifs (nuclear localization signal) lie at residues 58–64 (PRGRRQP) and 66–71 (PKARQP). At serine 99 the chain carries Phosphoserine; by host. Residues 112 to 152 (PRRRSRNLGKVIDTLTCGFADLMGYIPVVGAPLGGVAAALA) are important for endoplasmic reticulum and mitochondrial localization. Position 116 is a phosphoserine; by host PKA (serine 116). An interaction with APOA2 region spans residues 122–173 (VIDTLTCGFADLMGYIPVVGAPLGGVAAALAHGVRAIEDGINYATGNLPGCS). Residues 164–167 (YATG) are important for lipid droplets localization. Residues 169 to 189 (LPGCSFSIFLLALLSCLTTPA) form a helical membrane-spanning segment. A propeptide spans 178-191 (LLALLSCLTTPASA) (ER anchor for the core protein, removed in mature form by host signal peptidase). Topologically, residues 190-358 (SALTYGNSSG…FGGHWGILLA (169 aa)) are lumenal. N-linked (GlcNAc...) asparagine; by host glycosylation is found at asparagine 196, asparagine 209, asparagine 234, and asparagine 250. The important for fusion stretch occupies residues 265 to 296 (LAGAAVVCSSLYIGDLCGSLFLAGQLFTFQPR). Asparagine 305 carries an N-linked (GlcNAc...) asparagine; by host glycan. Residues 359–379 (VAYFGMAGNWLKVLAVLFLFA) form a helical membrane-spanning segment. At 380 to 730 (GVEATTTVGH…WEYIVLMFLV (351 aa)) the chain is on the lumenal side. Residues 385-411 (TTVGHGVARTTAGITGLFSPGASQNLQ) form an HVR1 region. N-linked (GlcNAc...) asparagine; by host glycosylation occurs at asparagine 415. N-linked (GlcNAc...) (high mannose) asparagine; by host glycans are attached at residues asparagine 422 and asparagine 429. Intrachain disulfides connect cysteine 428–cysteine 553, cysteine 451–cysteine 458, cysteine 487–cysteine 495, and cysteine 504–cysteine 509. An N-linked (GlcNAc...) asparagine; by host glycan is attached at asparagine 447. The tract at residues 474 to 479 (KVNISG) is HVR2. Residue asparagine 476 is glycosylated (N-linked (GlcNAc...) asparagine; by host). Residues 481 to 494 (SDDRPYCWHYAPRP) are CD81-binding 1. N-linked (GlcNAc...) asparagine; by host glycosylation occurs at asparagine 533. A CD81-binding 2 region spans residues 545–552 (PPTGGWFG). N-linked (GlcNAc...) asparagine; by host glycosylation occurs at asparagine 557. Residues cysteine 565 and cysteine 570 are joined by a disulfide bond. A glycan (N-linked (GlcNAc...) asparagine; by host) is linked at asparagine 578. Disulfide bonds link cysteine 586–cysteine 590, cysteine 602–cysteine 625, and cysteine 612–cysteine 649. N-linked (GlcNAc...) (high mannose) asparagine; by host glycosylation is found at asparagine 628 and asparagine 650. The cysteines at positions 657 and 682 are disulfide-linked. Positions 665–676 (IEMSPLLFSTTQ) are PKR/eIF2-alpha phosphorylation homology domain (PePHD). A helical transmembrane segment spans residues 731-751 (LADARICTCLWLMLLISNVEA). The Lumenal portion of the chain corresponds to 752–762 (AVERLVVLNAA). Residues 763-783 (SAAGTAGWWWAVLFLCCVWYV) traverse the membrane as a helical segment. Over 784-786 (KGR) the chain is Cytoplasmic. A helical transmembrane segment spans residues 787–808 (LVPACTYMALGMWPLLLTILAL). At 809 to 818 (PHRAYAMDNE) the chain is on the lumenal side. A helical transmembrane segment spans residues 819–839 (QAASLGAVGLLAITIFTITPT). At 840–843 (YKKL) the chain is on the cytoplasmic side. A helical membrane pass occupies residues 844-863 (LTCFIWWNQYFLARAEAMVH). Residues 864-886 (EWVPDLRVRGGRDSIILLTCLLH) lie on the Lumenal side of the membrane. The helical transmembrane segment at 887–907 (PQLGFEVTKILLAILAPLYIL) threads the bilayer. Positions 908–1031 (QYSLLKVPYF…DMQRGGWKLL (124 aa)) constitute a Peptidase C18 domain. At 908 to 1662 (QYSLLKVPYF…CMSADLEVIT (755 aa)) the chain is on the cytoplasmic side. Residues 909–1211 (YSLLKVPYFV…PVENMETTMR (303 aa)) form a protease NS2-3 region. Cysteine 927 is lipidated: S-palmitoyl cysteine; by host. The interval 934 to 954 (AGGRYVQACLLRLGAWTGTFI) is interaction with host SCPS1. Residues histidine 957, glutamate 977, and cysteine 998 each act as for protease NS2 activity; shared with dimeric partner in the active site. The Peptidase S29 domain occupies 1032–1213 (APITAYAQQT…ENMETTMRSP (182 aa)). Residues histidine 1088 and aspartate 1112 each act as charge relay system; for serine protease NS3 activity in the active site. Residues cysteine 1128 and cysteine 1130 each coordinate Zn(2+). Serine 1170 functions as the Charge relay system; for serine protease NS3 activity in the catalytic mechanism. The Zn(2+) site is built by cysteine 1176 and histidine 1180. One can recognise a Helicase ATP-binding domain in the interval 1222-1374 (PAVPQTYQVG…PNITETALPT (153 aa)). Residue 1235–1242 (APTGSGKS) coordinates ATP. Mg(2+) contacts are provided by serine 1242 and glutamate 1322. The short motif at 1321–1324 (DECH) is the DECH box element. The interval 1491–1503 (QRRGRTGRGKPGV) is RNA-binding. The helical transmembrane segment at 1663–1683 (STWVLVGGVLAALAAYCLSVG) threads the bilayer. Residues 1684-1695 (CVVICGRITLTG) are NS3-binding. Residues 1684-1810 (CVVICGRITL…SLTSPLRTSQ (127 aa)) lie on the Cytoplasmic side of the membrane. Residues 1811 to 1829 (TLLLNILGGWIAAQVAPPP) form a helical membrane-spanning segment. Residues 1830–1833 (ASTA) lie on the Lumenal side of the membrane. The helical transmembrane segment at 1834-1854 (FVVSGLAGAAVGSIRLGRVLV) threads the bilayer. A topological domain (cytoplasmic) is located at residue aspartate 1855. The helical transmembrane segment at 1856-1876 (VLAGYGAGVSGALVAFKIMSG) threads the bilayer. Topologically, residues 1877–1886 (DCPTTEDMVN) are lumenal. The helical transmembrane segment at 1887 to 1907 (LLPALLSPGALVVGVVCAAIL) threads the bilayer. The Cytoplasmic segment spans residues 1908 to 1977 (RRHVGPAEGA…WVNEDTATPC (70 aa)). Cysteine 1977 carries S-palmitoyl cysteine; by host lipidation. An intramembrane segment occupies 1978–2007 (ATSWLRDVWDWVCTVLSDFKVWLQAKLFPR). The Cytoplasmic segment spans residues 2008–2998 (LPGIPFLSCQ…YHSVSQARPR (991 aa)). Cysteine 2016, cysteine 2034, cysteine 2036, and cysteine 2057 together coordinate Zn(2+). The FKBP8-binding stretch occupies residues 2125–2213 (EFFTEVDGVR…ASSSASQLSA (89 aa)). The transcriptional activation stretch occupies residues 2125–2338 (EFFTEVDGVR…PIPPPRRKRL (214 aa)). The tract at residues 2140–2144 (PPCKP) is interaction with non-structural protein 4A. Residues 2189-2223 (ETASRRLKRGSPPSLASSSASQLSAPSLKATCTTS) are disordered. Residues 2194–2446 (RLKRGSPPSL…ALITPCAAEE (253 aa)) form an interaction with host SKP2 region. Residue serine 2199 is modified to Phosphoserine; by host; in p56. Over residues 2199–2216 (SPPSLASSSASQLSAPSL) the composition is skewed to low complexity. Phosphoserine; by host; in p58 occurs at positions 2202, 2206, 2209, 2212, and 2215. Residues 2215-2254 (SLKATCTTSKDHPDMELIEANLLWRQEMGGNITRVESENK) form an ISDR region. Residues 2215 to 2280 (SLKATCTTSK…REISVSAECH (66 aa)) form an interaction with EIF2AK2/PKR region. Positions 2254-2312 (KVVVLDSFEPLTAEYDEREISVSAECHRPPRHKFPPALPIWARPDYNPPLLQAWQMPGY) are NS4B-binding. The V3 stretch occupies residues 2305–2383 (QAWQMPGYEP…SITSPDPPAP (79 aa)). An SH3-binding motif is present at residues 2328 to 2331 (APIP). Positions 2333–2341 (PRRKRLVHL) match the Nuclear localization signal motif. Residue lysine 2356 forms a Glycyl lysine isopeptide (Lys-Gly) (interchain with G-Cter in ubiquitin) linkage. The interval 2359–2418 (VEGSSDPGPSSDSGLSITSPDPPAPTTPDDACSEAESYSSMPPLEGEPGDPDLSSGSWST) is disordered. Over residues 2361 to 2372 (GSSDPGPSSDSG) the composition is skewed to low complexity. Phosphoserine; by host occurs at positions 2457 and 2470. The region spanning 2642-2760 (PMGFSYDTRC…ICESAGVQED (119 aa)) is the RdRp catalytic domain. Mg(2+) contacts are provided by aspartate 2648, aspartate 2746, and aspartate 2747. The chain crosses the membrane as a helical span at residues 2999–3019 (LLLLGLLLLTVGVGIFLVPAR).

This sequence belongs to the hepacivirus polyprotein family. In terms of assembly, homooligomer. Interacts with E1 (via C-terminus). Interacts with the non-structural protein 5A. Interacts (via N-terminus) with host STAT1 (via SH2 domain); this interaction results in decreased STAT1 phosphorylation and ubiquitin-mediated proteasome-dependent STAT1 degradation, leading to decreased IFN-stimulated gene transcription. Interacts with host STAT3; this interaction constitutively activates STAT3. Interacts with host LTBR receptor. Interacts with host TNFRSF1A receptor and possibly induces apoptosis. Interacts with host HNRPK. Interacts with host YWHAE. Interacts with host UBE3A/E6AP. Interacts with host DDX3X. Interacts with host APOA2. Interacts with host RXRA protein. Interacts with host SP110 isoform 3/Sp110b; this interaction sequesters the transcriptional corepressor SP110 away from the nucleus. Interacts with host CREB3 nuclear transcription protein; this interaction triggers cell transformation. Interacts with host ACY3. Interacts with host C1QR1. Interacts with host RBM24; this interaction, which enhances the interaction of the mature core protein with 5'-UTR, may inhibit viral translation and favor replication. Interacts with host EIF2AK2/PKR; this interaction induces the autophosphorylation of EIF2AK2. Part of the viral assembly initiation complex composed of NS2, E1, E2, NS3, NS4A, NS5A and the mature core protein. Forms a heterodimer with envelope glycoprotein E2. Interacts with mature core protein. Interacts with protease NS2. The heterodimer E1/E2 interacts with host CLDN1; this interaction plays a role in viral entry into host cell. Interacts with host SPSB2 (via C-terminus). Part of the viral assembly initiation complex composed of NS2, E1, E2, NS3, NS4A, NS5A and the mature core protein. Interacts with host NEURL3; this interaction prevents E1 binding to glycoprotein E2. As to quaternary structure, forms a heterodimer with envelope glycoprotein E1. Interacts with host CD81 and SCARB1 receptors; these interactions play a role in viral entry into host cell. Interacts with host EIF2AK2/PKR; this interaction inhibits EIF2AK2 and probably allows the virus to evade the innate immune response. Interacts with host CD209/DC-SIGN and CLEC4M/DC-SIGNR. Interact with host SPCS1; this interaction is essential for viral particle assembly. Interacts with protease NS2. The heterodimer E1/E2 interacts with host CLDN1; this interaction plays a role in viral entry into host cell. Part of the viral assembly initiation complex composed of NS2, E1, E2, NS3, NS4A, NS5A and the mature core protein. Interacts with host SLC3A2/4F2hc; the interaction may facilitate viral entry into host cell. Interacts with human PLSCR1. In terms of assembly, homohexamer. Homoheptamer. Interacts with protease NS2. Homodimer. Interacts with host SPCS1; this interaction is essential for viral particle assembly. Interacts with envelope glycoprotein E1. Interacts with envelope glycoprotein E2. Interacts with viroporin p7. Interacts with serine protease/helicase NS3. Part of the replication complex composed of NS2, NS3, NS4A, NS4B, NS5A and the RNA-directed RNA polymerase embedded in an ER-derived membranous web. Part of the viral assembly initiation complex composed of NS2, E1, E2, NS3, NS4A, NS5A and the mature core protein. As to quaternary structure, interacts with protease NS2. Interacts with non-structural protein 4A; this interaction stabilizes the folding of NS3 serine protease. NS3-NS4A interaction is essential for NS3 activation and allows membrane anchorage of the latter. NS3/NS4A complex also prevents phosphorylation of host IRF3, thus preventing the establishment of dsRNA induced antiviral state. Interacts with host MAVS; this interaction leads to the cleavage and inhibition of host MAVS. Interacts with host TICAM1; this interaction leads to the cleavage and inhibition of host TICAM1. Interacts with host TANK-binding kinase/TBK1; this interaction results in the inhibition of the association between TBK1 and IRF3, which leads to the inhibition of IRF3 activation. Interacts with host RBM24. Part of the replication complex composed of NS2, NS3, NS4A, NS4B, NS5A and the RNA-directed RNA polymerase embedded in an ER-derived membranous web. Part of the viral assembly initiation complex composed of NS2, E1, E2, NS3, NS4A, NS5A and the mature core protein. In terms of assembly, interacts with NS3 serine protease; this interaction stabilizes the folding of NS3 serine protease. NS3-NS4A interaction is essential for NS3 activation and allows membrane anchorage of the latter. Interacts with non-structural protein 5A (via N-terminus). Part of the replication complex composed of NS2, NS3, NS4A, NS4B, NS5A and the RNA-directed RNA polymerase embedded in an ER-derived membranous web. Part of the viral assembly initiation complex composed of NS2, E1, E2, NS3, NS4A, NS5A and the mature core protein. Homomultimer. Interacts with non-structural protein NS5A. Interacts with host PLA2G4C; this interaction likely initiates the recruitment of replication complexes to lipid droplets. Interacts with host STING; this interaction disrupts the interaction between STING and TBK1 thereby suppressing the interferon signaling. Part of the replication complex composed of NS2, NS3, NS4A, NS4B, NS5A and the RNA-directed RNA polymerase embedded in an ER-derived membranous web. As to quaternary structure, monomer. Homodimer; dimerization is required for RNA-binding. Interacts with the mature core protein. Interacts (via N-terminus) with non-structural protein 4A. Interacts with non-structural protein 4B. Interacts (via region D2) with RNA-directed RNA polymerase. Part of the viral assembly initiation complex composed of NS2, E1, E2, NS3, NS4A, NS5A and the mature core protein. Part of the replication complex composed of NS2, NS3, NS4A, NS4B, NS5A and the RNA-directed RNA polymerase embedded in an ER-derived membranous web. Interacts with host GRB2. Interacts with host BIN1. Interacts with host PIK3R1. Interacts with host SRCAP. Interacts with host FKBP8. Interacts (via C-terminus) with host VAPB (via MSP domain). Interacts with host EIF2AK2/PKR; this interaction leads to disruption of EIF2AK2 dimerization by NS5A and probably allows the virus to evade the innate immune response. Interacts (via N-terminus) with host PACSIN2 (via N-terminus); this interaction attenuates protein kinase C alpha-mediated phosphorylation of PACSIN2 by disrupting the interaction between PACSIN2 and PRKCA. Interacts (via N-terminus) with host SRC kinase (via SH2 domain). Interacts with most Src-family kinases. Interacts with host IFI27 and SKP2; promotes the ubiquitin-mediated proteasomal degradation of NS5A. Interacts with host GPS2. Interacts with host TNFRSF21; this interaction allows the modulation by the virus of JNK, p38 MAPK, STAT3, and Akt signaling pathways in a DR6-dependent manner. Interacts (via N-terminus) with host CIDEB (via N-terminus); this interaction seems to regulate the association of HCV particles with APOE. Interacts with host CHKA/Choline Kinase-alpha; CHKA bridges host PI4KA and NS5A and potentiates NS5A-stimulated PI4KA activity, which then facilitates the targeting of the ternary complex to the ER for viral replication. Interacts with host SPSB2 (via C-terminus); this interaction targets NS5A for ubiquitination and degradation. Interacts with host RAB18; this interaction may promote the association of NS5A and other replicase components with lipid droplets. Interacts (via region D2) with host PPIA/CYPA; the interaction stimulates RNA-binding ability of NS5A and is dependent on the peptidyl-prolyl cis-trans isomerase activity of PPIA/CYPA. Interacts with host TRIM14; this interaction induces the degradation of NS5A. In terms of assembly, homooligomer. Interacts with non-structural protein 5A. Interacts with host VAPB. Interacts with host PRK2/PKN2. Interacts with host HNRNPA1 and SEPT6; these interactions facilitate viral replication. Part of the replication complex composed of NS2, NS3, NS4A, NS4B, NS5A and the RNA-directed RNA polymerase. It depends on Zn(2+) as a cofactor. Mg(2+) is required as a cofactor. In terms of processing, specific enzymatic cleavages in vivo yield mature proteins. The structural proteins, core, E1, E2 and p7 are produced by proteolytic processing by host signal peptidases. The core protein precursor is synthesized as a 23 kDa, which is retained in the ER membrane through the hydrophobic signal peptide. Cleavage by the signal peptidase releases the 21 kDa mature core protein. The cleavage of the core protein precursor occurs between aminoacids 176 and 188 but the exact cleavage site is not known. Some degraded forms of the core protein appear as well during the course of infection. The other proteins (p7, NS2, NS3, NS4A, NS4B, NS5A and NS5B) are cleaved by the viral proteases. Autoprocessing between NS2 and NS3 is mediated by the NS2 cysteine protease catalytic domain and regulated by the NS3 N-terminal domain. Phosphorylated by host PKC and PKA. Post-translationally, ubiquitinated; mediated by UBE3A and leading to core protein subsequent proteasomal degradation. In terms of processing, highly N-glycosylated. Palmitoylation is required for NS2/3 autoprocessing and E2 recruitment to membranes. Post-translationally, palmitoylated. This modification may play a role in its polymerization or in protein-protein interactions. In terms of processing, phosphorylated on serines in a basal form termed p56. p58 is a hyperphosphorylated form of p56. p56 and p58 coexist in the cell in roughly equivalent amounts. Hyperphosphorylation is dependent on the presence of NS4A. Host CSNK1A1/CKI-alpha or RPS6KB1 kinases may be responsible for NS5A phosphorylation. Tyrosine phosphorylation is essential for the interaction with host SRC. Post-translationally, the N-terminus is phosphorylated by host PRK2/PKN2.

It localises to the host endoplasmic reticulum membrane. Its subcellular location is the host mitochondrion membrane. The protein resides in the virion. It is found in the host cytoplasm. The protein localises to the host nucleus. It localises to the host lipid droplet. Its subcellular location is the virion membrane. The protein resides in the host mitochondrion. It is found in the host cell membrane. The protein localises to the host perinuclear region. It carries out the reaction Hydrolysis of four peptide bonds in the viral precursor polyprotein, commonly with Asp or Glu in the P6 position, Cys or Thr in P1 and Ser or Ala in P1'.. The enzyme catalyses a ribonucleoside 5'-triphosphate + H2O = a ribonucleoside 5'-diphosphate + phosphate + H(+). It catalyses the reaction ATP + H2O = ADP + phosphate + H(+). The catalysed reaction is RNA(n) + a ribonucleoside 5'-triphosphate = RNA(n+1) + diphosphate. Its activity is regulated as follows. Inhibited by the antiviral drug hexamethylene amiloride. Inhibition by amantadine appears to be genotype-dependent. Also inhibited by long-alkyl-chain iminosugar derivatives. With respect to regulation, activity is up-regulated by PRK2/PKN2-mediated phosphorylation. Its function is as follows. Packages viral RNA to form a viral nucleocapsid, and promotes virion budding. Participates in the viral particle production as a result of its interaction with the non-structural protein 5A. Binds RNA and may function as a RNA chaperone to induce the RNA structural rearrangements taking place during virus replication. Modulates viral translation initiation by interacting with viral IRES and 40S ribosomal subunit. Affects various cell signaling pathways, host immunity and lipid metabolism. Prevents the establishment of cellular antiviral state by blocking the interferon-alpha/beta (IFN-alpha/beta) and IFN-gamma signaling pathways and by blocking the formation of phosphorylated STAT1 and promoting ubiquitin-mediated proteasome-dependent degradation of STAT1. Activates STAT3 leading to cellular transformation. Regulates the activity of cellular genes, including c-myc and c-fos. May repress the promoter of p53, and sequester CREB3 and SP110 isoform 3/Sp110b in the cytoplasm. Represses cell cycle negative regulating factor CDKN1A, thereby interrupting an important check point of normal cell cycle regulation. Targets transcription factors involved in the regulation of inflammatory responses and in the immune response: suppresses TNF-induced NF-kappa-B activation, and activates AP-1. Binds to dendritic cells (DCs) via C1QR1, resulting in down-regulation of T-lymphocytes proliferation. Alters lipid metabolism by interacting with hepatocellular proteins involved in lipid accumulation and storage. Induces up-regulation of FAS promoter activity, and thereby contributes to the increased triglyceride accumulation in hepatocytes (steatosis). In terms of biological role, forms a heterodimer with envelope glycoprotein E2, which mediates virus attachment to the host cell, virion internalization through clathrin-dependent endocytosis and fusion with host membrane. Fusion with the host cell is most likely mediated by both E1 and E2, through conformational rearrangements of the heterodimer required for fusion rather than a classical class II fusion mechanism. E1/E2 heterodimer binds host apolipoproteins such as APOB and ApoE thereby forming a lipo-viro-particle (LVP). APOE associated to the LVP allows the initial virus attachment to cell surface receptors such as the heparan sulfate proteoglycans (HSPGs), syndecan-1 (SDC1), syndecan-1 (SDC2), the low-density lipoprotein receptor (LDLR) and scavenger receptor class B type I (SCARB1). The cholesterol transfer activity of SCARB1 allows E2 exposure and binding of E2 to SCARB1 and the tetraspanin CD81. E1/E2 heterodimer binding on CD81 activates the epithelial growth factor receptor (EGFR) signaling pathway. Diffusion of the complex E1-E2-EGFR-SCARB1-CD81 to the cell lateral membrane allows further interaction with Claudin 1 (CLDN1) and occludin (OCLN) to finally trigger HCV entry. Forms a heterodimer with envelope glycoprotein E1, which mediates virus attachment to the host cell, virion internalization through clathrin-dependent endocytosis and fusion with host membrane. Fusion with the host cell is most likely mediated by both E1 and E2, through conformational rearrangements of the heterodimer required for fusion rather than a classical class II fusion mechanism. The interaction between envelope glycoprotein E2 and host apolipoprotein E/APOE allows the proper assembly, maturation and infectivity of the viral particles. This interaction is probably promoted via the up-regulation of cellular autophagy by the virus. E1/E2 heterodimer binds host apolipoproteins such as APOB and APOE thereby forming a lipo-viro-particle (LVP). APOE associated to the LVP allows the initial virus attachment to cell surface receptors such as the heparan sulfate proteoglycans (HSPGs), syndecan-1 (SDC1), syndecan-1 (SDC2), the low-density lipoprotein receptor (LDLR) and scavenger receptor class B type I (SCARB1). The cholesterol transfer activity of SCARB1 allows E2 exposure and binding of E2 to SCARB1 and the tetraspanin CD81. E1/E2 heterodimer binding on CD81 activates the epithelial growth factor receptor (EGFR) signaling pathway. Diffusion of the complex E1-E2-EGFR-SCARB1-CD81 to the cell lateral membrane allows further interaction with Claudin 1 (CLDN1) and occludin (OCLN) to finally trigger HCV entry. Inhibits host EIF2AK2/PKR activation, preventing the establishment of an antiviral state. Viral ligand for CD209/DC-SIGN and CLEC4M/DC-SIGNR, which are respectively found on dendritic cells (DCs), and on liver sinusoidal endothelial cells and macrophage-like cells of lymph node sinuses. These interactions allow the capture of circulating HCV particles by these cells and subsequent facilitated transmission to permissive cells such as hepatocytes and lymphocyte subpopulations. The interaction between E2 and host amino acid transporter complex formed by SLC3A2 and SLC7A5/LAT1 may facilitate viral entry into host cell. Functionally, ion channel protein that acts as a viroporin and plays an essential role in the assembly, envelopment and secretion of viral particles. Regulates the host cell secretory pathway, which induces the intracellular retention of viral glycoproteins and favors assembly of viral particles. Creates a pore in acidic organelles and releases Ca(2+) and H(+) in the cytoplasm of infected cells, leading to a productive viral infection. High levels of cytoplasmic Ca(2+) may trigger membrane trafficking and transport of viral ER-associated proteins to viroplasms, sites of viral genome replication. This ionic imbalance induces the assembly of the inflammasome complex, which triggers the maturation of pro-IL-1beta into IL-1beta through the action of caspase-1. Targets also host mitochondria and induces mitochondrial depolarization. In addition of its role as a viroporin, acts as a lipid raft adhesion factor. Its function is as follows. Cysteine protease required for the proteolytic auto-cleavage between the non-structural proteins NS2 and NS3. The N-terminus of NS3 is required for the function of NS2 protease (active region NS2-3). Promotes the initiation of viral particle assembly by mediating the interaction between structural and non-structural proteins. In terms of biological role, displays three enzymatic activities: serine protease with a chymotrypsin-like fold, NTPase and RNA helicase. NS3 serine protease, in association with NS4A, is responsible for the cleavages of NS3-NS4A, NS4A-NS4B, NS4B-NS5A and NS5A-NS5B. The NS3/NS4A complex prevents phosphorylation of host IRF3, thus preventing the establishment of dsRNA induced antiviral state. The NS3/NS4A complex induces host amino acid transporter component SLC3A2, thus contributing to HCV propagation. NS3 RNA helicase binds to RNA and unwinds both dsDNA and dsRNA in the 3' to 5' direction, and likely resolves RNA complicated stable secondary structures in the template strand. Binds a single ATP and catalyzes the unzipping of a single base pair of dsRNA. Inhibits host antiviral proteins TBK1 and IRF3 thereby preventing the establishment of an antiviral state. Cleaves host MAVS/CARDIF thereby preventing the establishment of an antiviral state. Cleaves host TICAM1/TRIF, thereby disrupting TLR3 signaling and preventing the establishment of an antiviral state. Induces a specific membrane alteration that serves as a scaffold for the virus replication complex. This membrane alteration gives rise to the so-called ER-derived membranous web that contains the replication complex. NS4B self-interaction contributes to its function in membranous web formation. Promotes host TRIF protein degradation in a CASP8-dependent manner thereby inhibiting host TLR3-mediated interferon signaling. Disrupts the interaction between STING and TBK1 contributing to the inhibition of interferon signaling. Functionally, phosphorylated protein that is indispensable for viral replication and assembly. Both hypo- and hyperphosphorylated states are required for the viral life cycle. The hyperphosphorylated form of NS5A is an inhibitor of viral replication. Involved in RNA-binding and especially in binding to the viral genome. Zinc is essential for RNA-binding. Participates in the viral particle production as a result of its interaction with the mature viral core protein. Its interaction with host VAPB may target the viral replication complex to vesicles. Down-regulates viral IRES translation initiation. Mediates interferon resistance, presumably by interacting with and inhibiting host EIF2AK2/PKR. Prevents BIN1-induced apoptosis. Acts as a transcriptional activator of some host genes important for viral replication when localized in the nucleus. Via the interaction with host PACSIN2, modulates lipid droplet formation in order to promote virion assembly. Modulates TNFRSF21/DR6 signaling pathway for viral propagation. Its function is as follows. RNA-dependent RNA polymerase that performs primer-template recognition and RNA synthesis during viral replication. Initiates RNA transcription/replication at a flavin adenine dinucleotide (FAD), resulting in a 5'- FAD cap on viral RNAs. In this way, recognition of viral 5' RNA by host pattern recognition receptors can be bypassed, thereby evading activation of antiviral pathways. This chain is Genome polyprotein, found in Hepatitis C virus genotype 6a (isolate 6a33) (HCV).